The primary structure comprises 715 residues: Fatty acid oxidation complex subunit alpha (715 aa).

Residues 1 to 190 (MTTTSAFMLS…KAGLVDDVVP (190 aa)) form an enoyl-CoA hydratase region. Residues 306 to 714 (GPLNSVGILG…FWTNGETDQG (409 aa)) form a 3-hydroxyacyl-CoA dehydrogenase region.

The protein in the N-terminal section; belongs to the enoyl-CoA hydratase/isomerase family. In the central section; belongs to the 3-hydroxyacyl-CoA dehydrogenase family. Heterotetramer of two alpha chains (FadJ) and two beta chains (FadI).

Its subcellular location is the cytoplasm. The enzyme catalyses a (3S)-3-hydroxyacyl-CoA = a (2E)-enoyl-CoA + H2O. It catalyses the reaction a 4-saturated-(3S)-3-hydroxyacyl-CoA = a (3E)-enoyl-CoA + H2O. The catalysed reaction is a (3S)-3-hydroxyacyl-CoA + NAD(+) = a 3-oxoacyl-CoA + NADH + H(+). It carries out the reaction (3S)-3-hydroxybutanoyl-CoA = (3R)-3-hydroxybutanoyl-CoA. It functions in the pathway lipid metabolism; fatty acid beta-oxidation. Catalyzes the formation of a hydroxyacyl-CoA by addition of water on enoyl-CoA. Also exhibits 3-hydroxyacyl-CoA epimerase and 3-hydroxyacyl-CoA dehydrogenase activities. This is Fatty acid oxidation complex subunit alpha from Salmonella typhi.